We begin with the raw amino-acid sequence, 146 residues long: 3-hydroxyacyl-[acyl-carrier-protein] dehydratase FabZ (146 aa).

The active site involves H51.

This sequence belongs to the thioester dehydratase family. FabZ subfamily.

The protein resides in the cytoplasm. It catalyses the reaction a (3R)-hydroxyacyl-[ACP] = a (2E)-enoyl-[ACP] + H2O. Functionally, involved in unsaturated fatty acids biosynthesis. Catalyzes the dehydration of short chain beta-hydroxyacyl-ACPs and long chain saturated and unsaturated beta-hydroxyacyl-ACPs. This is 3-hydroxyacyl-[acyl-carrier-protein] dehydratase FabZ from Staphylococcus aureus (strain Mu3 / ATCC 700698).